A 119-amino-acid polypeptide reads, in one-letter code: Ribonuclease P protein component (119 aa).

This sequence belongs to the RnpA family. Consists of a catalytic RNA component (M1 or rnpB) and a protein subunit.

The enzyme catalyses Endonucleolytic cleavage of RNA, removing 5'-extranucleotides from tRNA precursor.. RNaseP catalyzes the removal of the 5'-leader sequence from pre-tRNA to produce the mature 5'-terminus. It can also cleave other RNA substrates such as 4.5S RNA. The protein component plays an auxiliary but essential role in vivo by binding to the 5'-leader sequence and broadening the substrate specificity of the ribozyme. This chain is Ribonuclease P protein component, found in Clostridium acetobutylicum (strain ATCC 824 / DSM 792 / JCM 1419 / IAM 19013 / LMG 5710 / NBRC 13948 / NRRL B-527 / VKM B-1787 / 2291 / W).